We begin with the raw amino-acid sequence, 335 residues long: 2-acylglycerol O-acyltransferase 1 (335 aa).

2 helical membrane passes run 24–44 (WVFS…SLVL) and 47–67 (LWLI…TPQA). Residues asparagine 77, asparagine 125, and asparagine 180 are each glycosylated (N-linked (GlcNAc...) asparagine).

This sequence belongs to the diacylglycerol acyltransferase family.

The protein resides in the endoplasmic reticulum membrane. The enzyme catalyses a 2-acylglycerol + an acyl-CoA = a 1,2-diacylglycerol + CoA. The catalysed reaction is a 2-acylglycerol + an acyl-CoA = a 1,2-diacyl-sn-glycerol + CoA. It carries out the reaction a 2-acylglycerol + an acyl-CoA = a 2,3-diacyl-sn-glycerol + CoA. It catalyses the reaction a 1-acylglycerol + an acyl-CoA = a 1,2-diacylglycerol + CoA. The enzyme catalyses a 1-acylglycerol + an acyl-CoA = a 1,3-diacylglycerol + CoA. The catalysed reaction is a 1-acyl-sn-glycerol + an acyl-CoA = a 1,3-diacyl-sn-glycerol + CoA. It carries out the reaction a 3-acyl-sn-glycerol + an acyl-CoA = a 1,3-diacyl-sn-glycerol + CoA. The protein operates within glycerolipid metabolism; triacylglycerol biosynthesis. Functionally, involved in glycerolipid synthesis and lipid metabolism. Catalyzes the formation of diacylglycerol, the precursor of triacylglycerol, by transferring the acyl chain of a fatty acyl-CoA to a monoacylglycerol, mainly at the sn-1 or sn-3 positions. It uses both sn-2-monoacylglycerol (2-acylglycerol) and sn-1-monoacylglycerol (1-acyl-sn-glycerol) equally well as substrates, and uses sn-3-monoacylglycerol (3-acyl-sn-glycerol) with lower efficiency. The sequence is that of 2-acylglycerol O-acyltransferase 1 (mogat1) from Xenopus tropicalis (Western clawed frog).